A 321-amino-acid chain; its full sequence is Probable DNA polymerase III subunit delta (321 aa).

The protein belongs to the DNA polymerase HolA subunit family. As to quaternary structure, component of the DNA clamp loading complex consisting of tau(3):delta(1):delta'(1). The DNA polymerase III holoenzyme complex contains at least 10 different subunits organized into 3 functionally essential subassemblies: the Pol III core, the beta sliding clamp processivity factor and the clamp-loading complex. The Pol III core (subunits alpha, epsilon and theta) contains the polymerase and the 3'-5' exonuclease proofreading activities. The polymerase is tethered to the template via the dimeric beta sliding clamp processivity factor. The DNA clamp-loading complex assembles the beta sliding clamp onto the primed template and plays a central role in the organization and communication at the replication fork.

It carries out the reaction DNA(n) + a 2'-deoxyribonucleoside 5'-triphosphate = DNA(n+1) + diphosphate. In terms of biological role, part of the beta sliding clamp loading complex, which hydrolyzes ATP to load the beta clamp onto primed DNA to form the DNA replication pre-initiation complex. DNA polymerase III is a complex, multichain enzyme responsible for most of the replicative synthesis in bacteria. This DNA polymerase also exhibits 3'-5' exonuclease activity. The delta subunit is the wrench that will open the beta subunit dimer. The DNA clamp loading complex (tau(3),delta,delta') is thought to load beta dimers onto DNA by binding ATP which alters the complex's conformation so it can bind beta sliding clamp dimers and open them at one interface. Primed DNA is recognized, ATP is hydrolyzed releasing the clamp loading complex and closing the beta sliding clamp ring around the primed DNA. This is Probable DNA polymerase III subunit delta from Rickettsia prowazekii (strain Madrid E).